The primary structure comprises 318 residues: Aspartate carbamoyltransferase catalytic subunit (318 aa).

Carbamoyl phosphate-binding residues include arginine 67 and threonine 68. Lysine 95 contacts L-aspartate. Residues arginine 117, histidine 145, and glutamine 148 each coordinate carbamoyl phosphate. Residues arginine 178 and arginine 236 each contribute to the L-aspartate site. Residues glycine 277 and proline 278 each contribute to the carbamoyl phosphate site.

The protein belongs to the aspartate/ornithine carbamoyltransferase superfamily. ATCase family. As to quaternary structure, heterododecamer (2C3:3R2) of six catalytic PyrB chains organized as two trimers (C3), and six regulatory PyrI chains organized as three dimers (R2).

The enzyme catalyses carbamoyl phosphate + L-aspartate = N-carbamoyl-L-aspartate + phosphate + H(+). It participates in pyrimidine metabolism; UMP biosynthesis via de novo pathway; (S)-dihydroorotate from bicarbonate: step 2/3. Functionally, catalyzes the condensation of carbamoyl phosphate and aspartate to form carbamoyl aspartate and inorganic phosphate, the committed step in the de novo pyrimidine nucleotide biosynthesis pathway. The protein is Aspartate carbamoyltransferase catalytic subunit of Roseiflexus sp. (strain RS-1).